The sequence spans 430 residues: UDP-N-acetylmuramoylalanine--D-glutamate ligase (430 aa).

109 to 115 serves as a coordination point for ATP; that stretch reads GTDGKST.

This sequence belongs to the MurCDEF family.

Its subcellular location is the cytoplasm. The enzyme catalyses UDP-N-acetyl-alpha-D-muramoyl-L-alanine + D-glutamate + ATP = UDP-N-acetyl-alpha-D-muramoyl-L-alanyl-D-glutamate + ADP + phosphate + H(+). It participates in cell wall biogenesis; peptidoglycan biosynthesis. In terms of biological role, cell wall formation. Catalyzes the addition of glutamate to the nucleotide precursor UDP-N-acetylmuramoyl-L-alanine (UMA). The polypeptide is UDP-N-acetylmuramoylalanine--D-glutamate ligase (Thermotoga maritima (strain ATCC 43589 / DSM 3109 / JCM 10099 / NBRC 100826 / MSB8)).